We begin with the raw amino-acid sequence, 2382 residues long: Highly reducing polyketide synthase srdA (2382 aa).

Residues 1–25 (MAPHSTLDSDYSSGSSTPTSASAAG) form a disordered region. The region spanning 44–474 (QEPIAIIGMG…GANAHAILEA (431 aa)) is the Ketosynthase family 3 (KS3) domain. Residues Cys-217, His-352, and His-390 each act as for beta-ketoacyl synthase activity in the active site. Positions 580–891 (VFTGQGAQWP…HYGSALSRGK (312 aa)) are malonyl-CoA:ACP transacylase (MAT) domain. The active-site For malonyltransferase activity is the Ser-672. The segment at 971-1108 (HDLLGSQVHG…GLVKIDSAPA (138 aa)) is N-terminal hotdog fold. Positions 971–1274 (HDLLGSQVHG…RQVSYQSGIQ (304 aa)) are dehydratase (DH) domain. One can recognise a PKS/mFAS DH domain in the interval 971–1275 (HDLLGSQVHG…QVSYQSGIQQ (305 aa)). The Proton acceptor; for dehydratase activity role is filled by His-1003. Positions 1121 to 1275 (MEPQAPRTWY…QVSYQSGIQQ (155 aa)) are C-terminal hotdog fold. Asp-1189 acts as the Proton donor; for dehydratase activity in catalysis. Residues 1668 to 1979 (GQIDSIFFRR…AKGHSGSVVV (312 aa)) are enoyl reductase (ER) domain. Positions 2004–2180 (SYLLVGCLGG…ATSIGLGMIS (177 aa)) are ketoreductase (KR) domain. The Carrier domain occupies 2298–2376 (SVEDAVLKMI…LLSELITKKM (79 aa)). Position 2335 is an O-(pantetheine 4'-phosphoryl)serine (Ser-2335).

Highly reducing polyketide synthase; part of the gene cluster that mediates the biosynthesis of sordarial, a salicylic aldehyde structurally related to the phytotoxin pyriculol. The most interesting aspect of this pathway is formation of an aromatic product from the highly reducing polyketide synthase srdA. SrdA synthesizes a reduced polyketide chain from one molecule of acetyl-CoA and five molecules of malonyl-CoA. The polyketide chain is then reductively released as an aldehyde. The oxidoreductases srdC, srdD and srdE then oxidize one of the hydroxy groups to facilitate the intramolecular aldol condensation, followed by dehydration to yield a salicylic aldehyde. This aldehyde can undergo facile reduction by endogenous reductases to yield the alcohol 1-hydroxy-2-hydroxymethyl-3-pent-1,3-dienylbenzene. The flavin-dependent srdI counteract against the propensity of the aldehydes to be reduced under physiological conditions and is responsible for reoxidizing 1-hydroxy-2-hydroxymethyl-3-pent-1,3-dienylbenzene back to the salicylic aldehyde. This salicylic aldehyde is then selectively epoxidized by the cupin-domain-containing oxidoreductase srdB to yield the epoxide, which can be hydrolyzed stereoselectively by the hydrolase srdG to give the final product sordarial. This is Highly reducing polyketide synthase srdA from Neurospora crassa (strain ATCC 24698 / 74-OR23-1A / CBS 708.71 / DSM 1257 / FGSC 987).